We begin with the raw amino-acid sequence, 352 residues long: D-alanine--D-alanine ligase A (352 aa).

The 204-residue stretch at 138–341 (KRMVQSAGLV…PPKLVGALVE (204 aa)) folds into the ATP-grasp domain. An ATP-binding site is contributed by 165 to 220 (ECLGSSTLFVKPATSGSSIGVSRVSNALEYAAAFAIAAREDTKVLVEAAVCGREIE). Mg(2+)-binding residues include D295, E308, and N310.

It belongs to the D-alanine--D-alanine ligase family. The cofactor is Mg(2+). Requires Mn(2+) as cofactor.

The protein localises to the cytoplasm. The catalysed reaction is 2 D-alanine + ATP = D-alanyl-D-alanine + ADP + phosphate + H(+). It functions in the pathway cell wall biogenesis; peptidoglycan biosynthesis. Its function is as follows. Cell wall formation. The sequence is that of D-alanine--D-alanine ligase A from Pseudomonas putida (strain ATCC 47054 / DSM 6125 / CFBP 8728 / NCIMB 11950 / KT2440).